A 217-amino-acid chain; its full sequence is Ufm1-specific protease 1 (217 aa).

Residues Cys-53, Asp-175, and His-177 contribute to the active site.

It belongs to the peptidase C78 family. In terms of tissue distribution, widely expressed. Expressed at higher level in brain, heart, kidney and skeletal muscle.

It localises to the cytoplasm. The protein resides in the cytosol. In terms of biological role, thiol-dependent isopeptidase that specifically mediate the processing of UFM1 precursors as well as the deconjugation of UFM1 from target proteins. Mainly responsible for the maturation of the UFM1 precursor, a prerequisite for conjugation reactions. This Mus musculus (Mouse) protein is Ufm1-specific protease 1.